Here is a 157-residue protein sequence, read N- to C-terminus: Glycine-rich RNA-binding protein (157 aa).

The RRM domain occupies 6–84; sequence YRCFVGGLAW…RNITVNEAQS (79 aa). The tract at residues 70 to 157 is disordered; it reads QELDGRNITV…YGGGGGGSRW (88 aa). Composition is skewed to gly residues over residues 86–138 and 145–157; these read GSGG…GGYG and DGGYGGGGGGSRW.

Functionally, may play a role in the biosynthesis and processing of heterogeneous nuclear RNA and in the maturation of specific mRNAs in response to wounding. In Daucus carota (Wild carrot), this protein is Glycine-rich RNA-binding protein.